The following is a 247-amino-acid chain: Triosephosphate isomerase (247 aa).

Substrate is bound by residues N10 and K12. H94 serves as the catalytic Electrophile. E164 serves as the catalytic Proton acceptor.

This sequence belongs to the triosephosphate isomerase family. As to quaternary structure, homodimer.

The protein localises to the cytoplasm. The enzyme catalyses D-glyceraldehyde 3-phosphate = dihydroxyacetone phosphate. It catalyses the reaction dihydroxyacetone phosphate = methylglyoxal + phosphate. It functions in the pathway carbohydrate biosynthesis; gluconeogenesis. Its pathway is carbohydrate degradation; glycolysis; D-glyceraldehyde 3-phosphate from glycerone phosphate: step 1/1. Its function is as follows. Triosephosphate isomerase is an extremely efficient metabolic enzyme that catalyzes the interconversion between dihydroxyacetone phosphate (DHAP) and D-glyceraldehyde-3-phosphate (G3P) in glycolysis and gluconeogenesis. Functionally, it is also responsible for the non-negligible production of methylglyoxal a reactive cytotoxic side-product that modifies and can alter proteins, DNA and lipids. This Latimeria chalumnae (Coelacanth) protein is Triosephosphate isomerase.